Consider the following 380-residue polypeptide: Kappa-type opioid receptor (380 aa).

The Extracellular segment spans residues Met-1–Ala-57. 2 N-linked (GlcNAc...) asparagine glycosylation sites follow: Asn-25 and Asn-39. A helical membrane pass occupies residues Ile-58–Ile-85. The Cytoplasmic segment spans residues Arg-86–Asn-95. The chain crosses the membrane as a helical span at residues Ile-96–Tyr-119. Residues Leu-120–Lys-132 lie on the Extracellular side of the membrane. A disulfide bridge links Cys-131 with Cys-210. Residues Ile-133–Val-154 form a helical membrane-spanning segment. The Cytoplasmic portion of the chain corresponds to Asp-155 to Leu-173. The helical transmembrane segment at Lys-174–Leu-196 threads the bilayer. Residues Gly-197–Trp-222 are Extracellular-facing. A helical membrane pass occupies residues Asp-223–Thr-247. The Cytoplasmic segment spans residues Leu-248–Lys-274. A helical transmembrane segment spans residues Leu-275 to Val-296. Residues Glu-297–Ser-311 are Extracellular-facing. The helical transmembrane segment at Tyr-312–Leu-333 threads the bilayer. The Cytoplasmic portion of the chain corresponds to Asp-334–Val-380. Cys-345 is lipidated: S-palmitoyl cysteine.

Belongs to the G-protein coupled receptor 1 family. In terms of assembly, interacts with NHERF1. Interacts with GABARAPL1. In terms of tissue distribution, detected in brain (at protein level). Brain (neocortex, hippocampus, amygdala, medial habenula, hypothalamus, locus ceruleus, and parabrachial nucleus).

The protein localises to the cell membrane. G-protein coupled opioid receptor that functions as a receptor for endogenous alpha-neoendorphins and dynorphins, but has low affinity for beta-endorphins. Also functions as a receptor for various synthetic opioids and for the psychoactive diterpene salvinorin A. Ligand binding causes a conformation change that triggers signaling via guanine nucleotide-binding proteins (G proteins) and modulates the activity of down-stream effectors, such as adenylate cyclase. Signaling leads to the inhibition of adenylate cyclase activity. Inhibits neurotransmitter release by reducing calcium ion currents and increasing potassium ion conductance. Plays a role in the perception of pain. Plays a role in mediating reduced physical activity upon treatment with synthetic opioids. Plays a role in the regulation of salivation in response to synthetic opioids. May play a role in arousal and regulation of autonomic and neuroendocrine functions. The chain is Kappa-type opioid receptor (Oprk1) from Mus musculus (Mouse).